Here is a 318-residue protein sequence, read N- to C-terminus: Homoserine O-succinyltransferase (318 aa).

Cysteine 142 acts as the Acyl-thioester intermediate in catalysis. Residues lysine 163 and serine 192 each contribute to the substrate site. Histidine 235 functions as the Proton acceptor in the catalytic mechanism. Residue glutamate 237 is part of the active site. Arginine 249 provides a ligand contact to substrate.

The protein belongs to the MetA family.

It is found in the cytoplasm. It catalyses the reaction L-homoserine + succinyl-CoA = O-succinyl-L-homoserine + CoA. The protein operates within amino-acid biosynthesis; L-methionine biosynthesis via de novo pathway; O-succinyl-L-homoserine from L-homoserine: step 1/1. Transfers a succinyl group from succinyl-CoA to L-homoserine, forming succinyl-L-homoserine. The chain is Homoserine O-succinyltransferase from Shewanella putrefaciens (strain CN-32 / ATCC BAA-453).